The chain runs to 196 residues: UPF0215 protein MM_1007 (196 aa).

It belongs to the UPF0215 family.

This chain is UPF0215 protein MM_1007, found in Methanosarcina mazei (strain ATCC BAA-159 / DSM 3647 / Goe1 / Go1 / JCM 11833 / OCM 88) (Methanosarcina frisia).